We begin with the raw amino-acid sequence, 738 residues long: Ethylene receptor (738 aa).

Transmembrane regions (helical) follow at residues 22–42 (ISDFFIAVAYFSIPIELVYFV), 53–73 (VLVQFGAFIVLCGATHLINLW), and 91–111 (VLTAVVSCATALMLVHIIPDL). The Cu cation site is built by Cys64 and His68. Residues 157–305 (DRHTILKTTL…VVADQVAVAL (149 aa)) form the GAF domain. The Histidine kinase domain occupies 348–585 (VMNHEMRTPM…TAIFIVKLGI (238 aa)). His351 is modified (phosphohistidine; by autocatalysis). A Response regulatory domain is found at 613-730 (KVLIMDDNGF…KMRSVLSELL (118 aa)). A 4-aspartylphosphate modification is found at Asp661.

Belongs to the ethylene receptor family. As to quaternary structure, homodimer; disulfide-linked. The cofactor is Cu cation. Activation probably requires a transfer of a phosphate group between a His in the transmitter domain and an Asp of the receiver domain.

It localises to the endoplasmic reticulum membrane. It catalyses the reaction ATP + protein L-histidine = ADP + protein N-phospho-L-histidine.. May act early in the ethylene signal transduction pathway, possibly as an ethylene receptor, or as a regulator of the pathway. The chain is Ethylene receptor (ETR1) from Nicotiana tabacum (Common tobacco).